The primary structure comprises 192 residues: Phosphoheptose isomerase (192 aa).

An SIS domain is found at 37–192 (LADSFKAGGK…IQLIEKEMAK (156 aa)). 52–54 (NGG) lines the substrate pocket. Zn(2+) contacts are provided by His61 and Glu65. Substrate contacts are provided by residues Glu65, 93–94 (ND), 119–121 (STS), Ser124, and Gln172. 2 residues coordinate Zn(2+): Gln172 and His180.

Belongs to the SIS family. GmhA subfamily. In terms of assembly, homotetramer. Zn(2+) is required as a cofactor.

The protein localises to the cytoplasm. The enzyme catalyses 2 D-sedoheptulose 7-phosphate = D-glycero-alpha-D-manno-heptose 7-phosphate + D-glycero-beta-D-manno-heptose 7-phosphate. It functions in the pathway carbohydrate biosynthesis; D-glycero-D-manno-heptose 7-phosphate biosynthesis; D-glycero-alpha-D-manno-heptose 7-phosphate and D-glycero-beta-D-manno-heptose 7-phosphate from sedoheptulose 7-phosphate: step 1/1. Its function is as follows. Catalyzes the isomerization of sedoheptulose 7-phosphate in D-glycero-D-manno-heptose 7-phosphate. This chain is Phosphoheptose isomerase, found in Escherichia fergusonii (strain ATCC 35469 / DSM 13698 / CCUG 18766 / IAM 14443 / JCM 21226 / LMG 7866 / NBRC 102419 / NCTC 12128 / CDC 0568-73).